The primary structure comprises 584 residues: ATP-dependent lipid A-core flippase (584 aa).

Helical transmembrane passes span 18–38 (LWPI…TLIL), 65–85 (VFVW…FSGF), 155–175 (IIGL…ILVL), 252–272 (IFDP…LYAA), and 277–297 (VMEM…IVLM). The ABC transmembrane type-1 domain maps to 30–312 (VVASITLILN…LTNVSAQFQR (283 aa)). The region spanning 344–580 (IIFDDVTFFY…QGIYAQLYKL (237 aa)) is the ABC transporter domain. 378-385 (GRSGSGKS) lines the ATP pocket.

This sequence belongs to the ABC transporter superfamily. Lipid exporter (TC 3.A.1.106) family. In terms of assembly, homodimer.

It is found in the cell inner membrane. The catalysed reaction is ATP + H2O + lipid A-core oligosaccharideSide 1 = ADP + phosphate + lipid A-core oligosaccharideSide 2.. Its function is as follows. Involved in lipopolysaccharide (LPS) biosynthesis. Translocates lipid A-core from the inner to the outer leaflet of the inner membrane. Transmembrane domains (TMD) form a pore in the inner membrane and the ATP-binding domain (NBD) is responsible for energy generation. In Blochmanniella pennsylvanica (strain BPEN), this protein is ATP-dependent lipid A-core flippase.